The following is a 75-amino-acid chain: Phi-liotoxin-Lw1a (75 aa).

A signal peptide spans Met-1–Gly-25. The propeptide occupies Asp-26 to Arg-39. 2 cysteine pairs are disulfide-bonded: Cys-50–Cys-62 and Cys-56–Cys-68.

As to expression, expressed by the venom gland.

The protein localises to the secreted. In terms of biological role, affects the activity of both ryanodine-sensitive calcium-release channels RyR1 and RyR2 with high potency. At lower concentrations the toxin increases full openings of the RyRs, and at higher concentrations it inhibits full openings and induce openings to subconductance levels and reduces the number of full conductance openings. The different actions may be attributed to the toxins binding at different sites on the RyRs, with binding at a high-affinity site mediating the increase in full openings and the induction of subconductance states evoked upon binding to a lower-affinity site. Insect-selective toxin that provokes a dose-dependent contractile paralysis in crickets and blowfly larvae, followed by death. The protein is Phi-liotoxin-Lw1a of Hormurus waigiensis (Australian rainforest scorpion).